We begin with the raw amino-acid sequence, 262 residues long: Linker for activation of T-cells family member 1 (262 aa).

The Extracellular portion of the chain corresponds to 1 to 4 (MEEA). A helical; Signal-anchor for type III membrane protein transmembrane segment spans residues 5–27 (ILVPCVLGLLLLPILAMLMALCV). S-palmitoyl cysteine attachment occurs at residues Cys26 and Cys29. Over 28 to 262 (HCHRLPGSYD…PDYENLQELN (235 aa)) the chain is Cytoplasmic. A Phosphothreonine modification is found at Thr39. Phosphoserine occurs at positions 40, 41, 43, 84, 101, 106, and 109. Positions 69-115 (SYPPLSQPDLLPIPRSPQPLGGSHRTPSSRRDSDGANSVASYENEGA) are disordered. Phosphotyrosine occurs at positions 110, 156, 161, 200, and 220. The segment at 161 to 164 (YLVV) is interaction with PLCG1. Interaction with GRB2, GRAP2 and PIK3R1 regions lie at residues 200 to 203 (YVNV) and 220 to 223 (YVNV). Residues 206–262 (SGESAEASLDGSREYVNVSQELHPGAAKTEPAALSSQEAEEVEEEGAPDYENLQELN) are disordered. Phosphoserine occurs at positions 224, 240, and 241. Residues 243–253 (EAEEVEEEGAP) show a composition bias toward acidic residues. At Tyr255 the chain carries Phosphotyrosine.

In terms of assembly, when phosphorylated, interacts directly with the PIK3R1 subunit of phosphoinositide 3-kinase and the SH2 domains of GRB2, GRAP, GRAP2, PLCG1 and PLCG2. Interacts indirectly with CBL, SOS, VAV, and LCP2. Interacts with SHB, SKAP2 and CLNK. Interacts with FCGR1A. Interacts with GRB2, PLCG1 and THEMIS upon TCR activation in thymocytes. Interacts with THEMIS2. (Microbial infection) Interacts with herpes virus 1/HHV-1 protein US3; this interaction prevents the interaction between LAT and TRAF6. Phosphorylated on tyrosines by ZAP70 upon TCR activation, or by SYK upon other immunoreceptor activation; which leads to the recruitment of multiple signaling molecules. Is one of the most prominently tyrosine-phosphorylated proteins detected following TCR engagement. May be dephosphorylated by PTPRJ. Phosphorylated by ITK leading to the recruitment of VAV1 to LAT-containing complexes. Post-translationally, palmitoylation of Cys-26 and Cys-29 is required for raft targeting and efficient phosphorylation. In terms of processing, 'Lys-63'-linked ubiquitinated by TRAF6. In terms of tissue distribution, expressed in thymus, T-cells, NK cells, mast cells and, at lower levels, in spleen. Present in T-cells but not B-cells (at protein level).

It localises to the cell membrane. Its function is as follows. Required for TCR (T-cell antigen receptor)- and pre-TCR-mediated signaling, both in mature T-cells and during their development. Involved in FCGR3 (low affinity immunoglobulin gamma Fc region receptor III)-mediated signaling in natural killer cells and FCER1 (high affinity immunoglobulin epsilon receptor)-mediated signaling in mast cells. Couples activation of these receptors and their associated kinases with distal intracellular events such as mobilization of intracellular calcium stores, PKC activation, MAPK activation or cytoskeletal reorganization through the recruitment of PLCG1, GRB2, GRAP2, and other signaling molecules. The protein is Linker for activation of T-cells family member 1 (LAT) of Homo sapiens (Human).